Here is a 223-residue protein sequence, read N- to C-terminus: Deoxyribose-phosphate aldolase (223 aa).

Catalysis depends on Asp-91, which acts as the Proton donor/acceptor. Lys-153 functions as the Schiff-base intermediate with acetaldehyde in the catalytic mechanism. Catalysis depends on Lys-182, which acts as the Proton donor/acceptor.

This sequence belongs to the DeoC/FbaB aldolase family. DeoC type 1 subfamily.

The protein localises to the cytoplasm. It catalyses the reaction 2-deoxy-D-ribose 5-phosphate = D-glyceraldehyde 3-phosphate + acetaldehyde. It participates in carbohydrate degradation; 2-deoxy-D-ribose 1-phosphate degradation; D-glyceraldehyde 3-phosphate and acetaldehyde from 2-deoxy-alpha-D-ribose 1-phosphate: step 2/2. Catalyzes a reversible aldol reaction between acetaldehyde and D-glyceraldehyde 3-phosphate to generate 2-deoxy-D-ribose 5-phosphate. The chain is Deoxyribose-phosphate aldolase from Streptococcus pyogenes serotype M28 (strain MGAS6180).